The sequence spans 113 residues: Na(+)/H(+) antiporter subunit C1 (113 aa).

3 helical membrane-spanning segments follow: residues 1–21 (MEII…YLVL), 28–48 (IVMG…TMGG), and 72–92 (LILT…VLAF).

The protein belongs to the CPA3 antiporters (TC 2.A.63) subunit C family. May form a heterooligomeric complex that consists of seven subunits: mnhA1, mnhB1, mnhC1, mnhD1, mnhE1, mnhF1 and mnhG1.

The protein localises to the cell membrane. Mnh complex is a Na(+)/H(+) antiporter involved in Na(+) excretion. This is Na(+)/H(+) antiporter subunit C1 (mnhC1) from Staphylococcus haemolyticus (strain JCSC1435).